We begin with the raw amino-acid sequence, 187 residues long: Segregation and condensation protein B (187 aa).

The protein belongs to the ScpB family. Homodimer. Homodimerization may be required to stabilize the binding of ScpA to the Smc head domains. Component of a cohesin-like complex composed of ScpA, ScpB and the Smc homodimer, in which ScpA and ScpB bind to the head domain of Smc. The presence of the three proteins is required for the association of the complex with DNA.

The protein resides in the cytoplasm. Participates in chromosomal partition during cell division. May act via the formation of a condensin-like complex containing Smc and ScpA that pull DNA away from mid-cell into both cell halves. The chain is Segregation and condensation protein B from Agathobacter rectalis (strain ATCC 33656 / DSM 3377 / JCM 17463 / KCTC 5835 / VPI 0990) (Eubacterium rectale).